Here is a 360-residue protein sequence, read N- to C-terminus: Phosphate acyltransferase (360 aa).

It belongs to the PlsX family. Homodimer. Probably interacts with PlsY.

It localises to the cytoplasm. The enzyme catalyses a fatty acyl-[ACP] + phosphate = an acyl phosphate + holo-[ACP]. It participates in lipid metabolism; phospholipid metabolism. In terms of biological role, catalyzes the reversible formation of acyl-phosphate (acyl-PO(4)) from acyl-[acyl-carrier-protein] (acyl-ACP). This enzyme utilizes acyl-ACP as fatty acyl donor, but not acyl-CoA. This chain is Phosphate acyltransferase, found in Thermobifida fusca (strain YX).